We begin with the raw amino-acid sequence, 801 residues long: Xaa-Pro dipeptidyl-peptidase (801 aa).

Catalysis depends on charge relay system residues S371, D491, and H522.

It belongs to the peptidase S15 family. In terms of assembly, homodimer.

The protein resides in the cytoplasm. The catalysed reaction is Hydrolyzes Xaa-Pro-|- bonds to release unblocked, N-terminal dipeptides from substrates including Ala-Pro-|-p-nitroanilide and (sequentially) Tyr-Pro-|-Phe-Pro-|-Gly-Pro-|-Ile.. Its function is as follows. Removes N-terminal dipeptides sequentially from polypeptides having unsubstituted N-termini provided that the penultimate residue is proline. This Ligilactobacillus salivarius (strain UCC118) (Lactobacillus salivarius) protein is Xaa-Pro dipeptidyl-peptidase.